A 658-amino-acid chain; its full sequence is Putative phospholipase B-like lamina ancestor (658 aa).

The N-terminal stretch at 1-29 is a signal peptide; the sequence is MLKVVGASWQKTRIGTYILIGAGLLVIGA. N-linked (GlcNAc...) asparagine glycans are attached at residues Asn229, Asn465, and Asn486.

This sequence belongs to the phospholipase B-like family. In terms of tissue distribution, expressed in neural and glial progenitors prior to, but not after, differentiation. Not expressed in late third instar disks, but is expressed uniformly by early third instar disks, in the imaginal ring of the proventriculus and in the salivary gland.

Its subcellular location is the secreted. In terms of biological role, putative phospholipase. Involved in the regulation of cellular plasticity in imaginal disks. This chain is Putative phospholipase B-like lamina ancestor (lama), found in Drosophila melanogaster (Fruit fly).